Here is a 414-residue protein sequence, read N- to C-terminus: Enolase (414 aa).

Gln-162 is a (2R)-2-phosphoglycerate binding site. Catalysis depends on Glu-204, which acts as the Proton donor. Positions 239, 280, and 307 each coordinate Mg(2+). The (2R)-2-phosphoglycerate site is built by Lys-332, Arg-361, Ser-362, and Lys-383. Lys-332 acts as the Proton acceptor in catalysis.

It belongs to the enolase family. It depends on Mg(2+) as a cofactor.

It localises to the cytoplasm. The protein resides in the secreted. Its subcellular location is the cell surface. It carries out the reaction (2R)-2-phosphoglycerate = phosphoenolpyruvate + H2O. Its pathway is carbohydrate degradation; glycolysis; pyruvate from D-glyceraldehyde 3-phosphate: step 4/5. In terms of biological role, catalyzes the reversible conversion of 2-phosphoglycerate (2-PG) into phosphoenolpyruvate (PEP). It is essential for the degradation of carbohydrates via glycolysis. This Campylobacter lari (strain RM2100 / D67 / ATCC BAA-1060) protein is Enolase.